Here is a 669-residue protein sequence, read N- to C-terminus: CoB--CoM heterodisulfide reductase iron-sulfur subunit A 1 (669 aa).

Residue 153–176 (GGGIAGIQAALDLADQGFKVYLVE) participates in FAD binding. A non-standard amino acid (selenocysteine) is located at residue Sec200. 4Fe-4S ferredoxin-type domains follow at residues 239-270 (KKPR…FDLG), 287-318 (LVYT…FDQE), 584-613 (ITAT…MVEK), and 617-646 (RVAE…LRYY). The [4Fe-4S] cluster site is built by Cys249, Cys252, Cys255, Cys259, Cys296, Cys299, Cys302, Cys306, Cys593, Cys596, Cys599, Cys603, Cys626, Cys629, Cys632, and Cys636.

It belongs to the HdrA family. As to quaternary structure, the ferredoxin:CoB-CoM heterodisulfide reductase is composed of three subunits; HdrA, HdrB and HdrC. The cofactor is [4Fe-4S] cluster. Requires FAD as cofactor.

The protein operates within cofactor metabolism; coenzyme M-coenzyme B heterodisulfide reduction; coenzyme B and coenzyme M from coenzyme M-coenzyme B heterodisulfide: step 1/1. Its function is as follows. Part of a complex that catalyzes the reversible reduction of CoM-S-S-CoB to the thiol-coenzymes H-S-CoM (coenzyme M) and H-S-CoB (coenzyme B). The polypeptide is CoB--CoM heterodisulfide reductase iron-sulfur subunit A 1 (hdrA1) (Methanopyrus kandleri (strain AV19 / DSM 6324 / JCM 9639 / NBRC 100938)).